A 135-amino-acid chain; its full sequence is Small ribosomal subunit protein uS12c (135 aa).

This sequence belongs to the universal ribosomal protein uS12 family. As to quaternary structure, part of the 30S ribosomal subunit.

It localises to the plastid. Its subcellular location is the chloroplast. In terms of biological role, with S4 and S5 plays an important role in translational accuracy. Located at the interface of the 30S and 50S subunits. This Adiantum capillus-veneris (Maidenhair fern) protein is Small ribosomal subunit protein uS12c (rps12).